A 219-amino-acid chain; its full sequence is Thymidylate kinase (219 aa).

10–17 (GLEGAGKT) is a binding site for ATP.

This sequence belongs to the thymidylate kinase family.

It carries out the reaction dTMP + ATP = dTDP + ADP. Phosphorylation of dTMP to form dTDP in both de novo and salvage pathways of dTTP synthesis. This Pectobacterium carotovorum subsp. carotovorum (strain PC1) protein is Thymidylate kinase.